The following is a 188-amino-acid chain: Elongation factor P (188 aa).

It belongs to the elongation factor P family.

It localises to the cytoplasm. It participates in protein biosynthesis; polypeptide chain elongation. In terms of biological role, involved in peptide bond synthesis. Stimulates efficient translation and peptide-bond synthesis on native or reconstituted 70S ribosomes in vitro. Probably functions indirectly by altering the affinity of the ribosome for aminoacyl-tRNA, thus increasing their reactivity as acceptors for peptidyl transferase. In Leptospira borgpetersenii serovar Hardjo-bovis (strain JB197), this protein is Elongation factor P.